The sequence spans 227 residues: MICOS complex subunit MIC19 (227 aa).

Residue Gly-2 is the site of N-myristoyl glycine attachment. A Phosphoserine modification is found at Ser-29. The tract at residues Asp-34–Glu-60 is disordered. The segment covering Thr-39–Ala-55 has biased composition (polar residues). Tyr-49 is modified (phosphotyrosine). Phosphoserine occurs at positions 50, 56, and 58. Lys-142 is modified (N6-acetyllysine). The CHCH domain occupies His-180 to Thr-222. 2 short sequence motifs (cx9C motif) span residues Cys-183 to Cys-193 and Cys-204 to Cys-214. Disulfide bonds link Cys-183/Cys-214 and Cys-193/Cys-204.

Belongs to the MICOS complex subunit Mic19 family. Metazoan Mic19 subfamily. As to quaternary structure, component of the mitochondrial contact site and cristae organizing system (MICOS) complex, composed of at least MICOS10/MIC10, CHCHD3/MIC19, CHCHD6/MIC25, APOOL/MIC27, IMMT/MIC60, APOO/MIC23/MIC26 and MICOS13/MIC13. This complex was also known under the names MINOS or MitOS complex. The MICOS complex associates with mitochondrial outer membrane proteins SAMM50, MTX1 and MTX2 (together described as components of the mitochondrial outer membrane sorting assembly machinery (SAM) complex) and DNAJC11, mitochondrial inner membrane protein TMEM11 and with HSPA9. The MICOS and SAM complexes together with DNAJC11 are part of a large protein complex spanning both membranes termed the mitochondrial intermembrane space bridging (MIB) complex. Interacts with HSPA1A/HSPA1B and OPA1, preferentially with the soluble OPA1 form. Interacts with IMMT/MIC60.

Its subcellular location is the mitochondrion inner membrane. The protein localises to the cytoplasm. It localises to the nucleus. It is found in the mitochondrion. Functionally, component of the MICOS complex, a large protein complex of the mitochondrial inner membrane that plays crucial roles in the maintenance of crista junctions, inner membrane architecture, and formation of contact sites to the outer membrane. Has also been shown to function as a transcription factor which binds to the BAG1 promoter and represses BAG1 transcription. Plays an important role in the maintenance of the MICOS complex stability and the mitochondrial cristae morphology. The chain is MICOS complex subunit MIC19 (CHCHD3) from Bos taurus (Bovine).